The following is a 250-amino-acid chain: Proteasome subunit alpha type-4 (250 aa).

The protein belongs to the peptidase T1A family. In terms of assembly, the 26S proteasome consists of a 20S proteasome core and two 19S regulatory subunits. The 20S proteasome core is composed of 28 subunits that are arranged in four stacked rings, resulting in a barrel-shaped structure. The two end rings are each formed by seven alpha subunits, and the two central rings are each formed by seven beta subunits. The catalytic chamber with the active sites is on the inside of the barrel.

The protein resides in the cytoplasm. It localises to the nucleus. Functionally, the proteasome is a multicatalytic proteinase complex which is characterized by its ability to cleave peptides with Arg, Phe, Tyr, Leu, and Glu adjacent to the leaving group at neutral or slightly basic pH. The proteasome has an ATP-dependent proteolytic activity. The protein is Proteasome subunit alpha type-4 (PAC1) of Spinacia oleracea (Spinach).